We begin with the raw amino-acid sequence, 1026 residues long: SWI/SNF-related matrix-associated actin-dependent regulator of chromatin subfamily A containing DEAD/H box 1 (1026 aa).

At M1 the chain carries N-acetylmethionine. The disordered stretch occupies residues 1-82; the sequence is MNLFNLDRFR…DNERKASISY (82 aa). Over residues 7 to 19 the composition is skewed to basic and acidic residues; that stretch reads DRFRFEKRNKIEE. The residue at position 54 (T54) is a Phosphothreonine. A Phosphoserine modification is found at S57. The residue at position 71 (T71) is a Phosphothreonine. K77 is covalently cross-linked (Glycyl lysine isopeptide (Lys-Gly) (interchain with G-Cter in SUMO2)). S79 carries the phosphoserine modification. A Glycyl lysine isopeptide (Lys-Gly) (interchain with G-Cter in SUMO2) cross-link involves residue K84. A phosphoserine mark is found at S124, S127, S132, S146, and S152. The 43-residue stretch at 157–199 folds into the CUE 1 domain; sequence LKDAKLQTLKELFPQRSDNDLLKLIESTSTMDGAIAAALLMFG. Disordered regions lie at residues 203-251 and 302-328; these read GGPR…NWEK and SQSEVPNGKEVSSRSQNYPKNATKTKL. 2 positions are modified to phosphoserine: S211 and S214. Position 217 is a phosphotyrosine (Y217). A compositionally biased stretch (basic and acidic residues) spans 226 to 238; the sequence is QSIKKTRLDHGEE. S239 and S242 each carry phosphoserine. Positions 251-294 constitute a CUE 2 domain; that stretch reads KQESIVLKLQKEFPNFDKQELREVLKEHEWMYTEALESLKVFAE. Position 302 is a phosphoserine (S302). Polar residues predominate over residues 314-323; sequence SRSQNYPKNA. Residue K335 forms a Glycyl lysine isopeptide (Lys-Gly) (interchain with G-Cter in SUMO2) linkage. Residues 354–373 form a disordered region; that stretch reads VVEDSEYDSGSDVGSSLDED. Residue K471 forms a Glycyl lysine isopeptide (Lys-Gly) (interchain with G-Cter in SUMO2) linkage. In terms of domain architecture, Helicase ATP-binding spans 509–677; sequence ALVHKHGLNG…MSLLNFVMPH (169 aa). An ATP-binding site is contributed by 521 to 529; sequence ADEMGLGKT. Positions 628–631 match the DEGH box motif; the sequence is DEGH. Positions 721–738 match the Nuclear localization signal motif; that stretch reads RRVKEEVLKQLPPKKDRI. Residue K724 forms a Glycyl lysine isopeptide (Lys-Gly) (interchain with G-Cter in SUMO2) linkage. A Helicase C-terminal domain is found at 858-1010; that stretch reads VLGCILSELK…MTTVDEGDEG (153 aa). Position 897-904 (897-904) interacts with ATP; it reads YLRLDGKT. K996 participates in a covalent cross-link: Glycyl lysine isopeptide (Lys-Gly) (interchain with G-Cter in SUMO2). The DEGD box motif lies at 1005 to 1008; it reads DEGD.

This sequence belongs to the SNF2/RAD54 helicase family. In terms of assembly, binds to DNA preferentially in the vicinity of transcriptional start sites. Interacts with MSH2 and TRIM28. Part of a complex composed of TRIM28, HDAC1, HDAC2 and EHMT2. Interacts with PCNA. Isoform 1 is expressed ubiquitously. Isoform 3 is expressed mainly in skin and esophagus. Expressed in fibroblasts and keratinocytes (at protein level).

It is found in the nucleus. It localises to the chromosome. It catalyses the reaction ATP + H2O = ADP + phosphate + H(+). DNA helicase that possesses intrinsic ATP-dependent nucleosome-remodeling activity and is both required for DNA repair and heterochromatin organization. Promotes DNA end resection of double-strand breaks (DSBs) following DNA damage: probably acts by weakening histone DNA interactions in nucleosomes flanking DSBs. Required for the restoration of heterochromatin organization after replication. Acts at replication sites to facilitate the maintenance of heterochromatin by directing H3 and H4 histones deacetylation, H3 'Lys-9' trimethylation (H3K9me3) and restoration of silencing. This Homo sapiens (Human) protein is SWI/SNF-related matrix-associated actin-dependent regulator of chromatin subfamily A containing DEAD/H box 1.